A 209-amino-acid chain; its full sequence is Type III pantothenate kinase (209 aa).

Residue D5–N12 participates in ATP binding. Residues Y68 and G72–R75 contribute to the substrate site. D74 serves as the catalytic Proton acceptor. D89 contributes to the K(+) binding site. An ATP-binding site is contributed by S92. Residue T144 coordinates substrate.

The protein belongs to the type III pantothenate kinase family. As to quaternary structure, homodimer. NH4(+) is required as a cofactor. K(+) serves as cofactor.

The protein resides in the cytoplasm. It carries out the reaction (R)-pantothenate + ATP = (R)-4'-phosphopantothenate + ADP + H(+). It functions in the pathway cofactor biosynthesis; coenzyme A biosynthesis; CoA from (R)-pantothenate: step 1/5. Its function is as follows. Catalyzes the phosphorylation of pantothenate (Pan), the first step in CoA biosynthesis. The sequence is that of Type III pantothenate kinase from Campylobacter jejuni (strain RM1221).